The sequence spans 150 residues: Cytochrome c oxidase subunit 5A, mitochondrial (150 aa).

Residues methionine 1–tyrosine 41 constitute a mitochondrion transit peptide. The SIFI-degron signature appears at leucine 2 to arginine 20. An N6-acetyllysine mark is found at lysine 87 and lysine 113. The residue at position 141 (threonine 141) is a Phosphothreonine.

This sequence belongs to the cytochrome c oxidase subunit 5A family. As to quaternary structure, component of the cytochrome c oxidase (complex IV, CIV), a multisubunit enzyme composed of 14 subunits. The complex is composed of a catalytic core of 3 subunits MT-CO1, MT-CO2 and MT-CO3, encoded in the mitochondrial DNA, and 11 supernumerary subunits COX4I, COX5A, COX5B, COX6A, COX6B, COX6C, COX7A, COX7B, COX7C, COX8 and NDUFA4, which are encoded in the nuclear genome. The complex exists as a monomer or a dimer and forms supercomplexes (SCs) in the inner mitochondrial membrane with NADH-ubiquinone oxidoreductase (complex I, CI) and ubiquinol-cytochrome c oxidoreductase (cytochrome b-c1 complex, complex III, CIII), resulting in different assemblies (supercomplex SCI(1)III(2)IV(1) and megacomplex MCI(2)III(2)IV(2)). Interacts with AFG1L. Interacts with RAB5IF. In terms of processing, in response to mitochondrial stress, the precursor protein is ubiquitinated by the SIFI complex in the cytoplasm before mitochondrial import, leading to its degradation. Within the SIFI complex, UBR4 initiates ubiquitin chain that are further elongated or branched by KCMF1.

The protein resides in the mitochondrion inner membrane. The protein operates within energy metabolism; oxidative phosphorylation. In terms of biological role, component of the cytochrome c oxidase, the last enzyme in the mitochondrial electron transport chain which drives oxidative phosphorylation. The respiratory chain contains 3 multisubunit complexes succinate dehydrogenase (complex II, CII), ubiquinol-cytochrome c oxidoreductase (cytochrome b-c1 complex, complex III, CIII) and cytochrome c oxidase (complex IV, CIV), that cooperate to transfer electrons derived from NADH and succinate to molecular oxygen, creating an electrochemical gradient over the inner membrane that drives transmembrane transport and the ATP synthase. Cytochrome c oxidase is the component of the respiratory chain that catalyzes the reduction of oxygen to water. Electrons originating from reduced cytochrome c in the intermembrane space (IMS) are transferred via the dinuclear copper A center (CU(A)) of subunit 2 and heme A of subunit 1 to the active site in subunit 1, a binuclear center (BNC) formed by heme A3 and copper B (CU(B)). The BNC reduces molecular oxygen to 2 water molecules using 4 electrons from cytochrome c in the IMS and 4 protons from the mitochondrial matrix. The chain is Cytochrome c oxidase subunit 5A, mitochondrial (COX5A) from Macaca mulatta (Rhesus macaque).